Consider the following 750-residue polypeptide: 1,4-alpha-glucan branching enzyme GlgB (750 aa).

The active-site Nucleophile is Asp425. Catalysis depends on Glu478, which acts as the Proton donor.

This sequence belongs to the glycosyl hydrolase 13 family. GlgB subfamily. Monomer.

The catalysed reaction is Transfers a segment of a (1-&gt;4)-alpha-D-glucan chain to a primary hydroxy group in a similar glucan chain.. The protein operates within glycan biosynthesis; glycogen biosynthesis. Its function is as follows. Catalyzes the formation of the alpha-1,6-glucosidic linkages in glycogen by scission of a 1,4-alpha-linked oligosaccharide from growing alpha-1,4-glucan chains and the subsequent attachment of the oligosaccharide to the alpha-1,6 position. This is 1,4-alpha-glucan branching enzyme GlgB from Cupriavidus pinatubonensis (strain JMP 134 / LMG 1197) (Cupriavidus necator (strain JMP 134)).